The primary structure comprises 478 residues: Serine hydroxymethyltransferase (478 aa).

Residues Leu161 and 165–167 contribute to the (6S)-5,6,7,8-tetrahydrofolate site; that span reads GHL. Lys273 carries the post-translational modification N6-(pyridoxal phosphate)lysine. Residue Glu291 participates in (6S)-5,6,7,8-tetrahydrofolate binding.

This sequence belongs to the SHMT family. In terms of assembly, homodimer. The cofactor is pyridoxal 5'-phosphate.

The protein resides in the cytoplasm. It carries out the reaction (6R)-5,10-methylene-5,6,7,8-tetrahydrofolate + glycine + H2O = (6S)-5,6,7,8-tetrahydrofolate + L-serine. It participates in one-carbon metabolism; tetrahydrofolate interconversion. Its pathway is amino-acid biosynthesis; glycine biosynthesis; glycine from L-serine: step 1/1. In terms of biological role, catalyzes the reversible interconversion of serine and glycine with tetrahydrofolate (THF) serving as the one-carbon carrier. This reaction serves as the major source of one-carbon groups required for the biosynthesis of purines, thymidylate, methionine, and other important biomolecules. Also exhibits THF-independent aldolase activity toward beta-hydroxyamino acids, producing glycine and aldehydes, via a retro-aldol mechanism. In Salinispora tropica (strain ATCC BAA-916 / DSM 44818 / JCM 13857 / NBRC 105044 / CNB-440), this protein is Serine hydroxymethyltransferase.